The primary structure comprises 7126 residues: Replicase polyprotein 1ab (7126 aa).

In terms of domain architecture, CoV Nsp1 globular spans 25-151; that stretch reads RSDHVACTVP…EHTFLLRKNG (127 aa). Residues 167 to 195 form the BetaCoV Nsp1 C-terminal domain; it reads TPYVEILDDLEADPTGKYSQNLLKKLIGG. One can recognise a CoV Nsp2 N-terminal domain in the interval 197–472; it reads CIPVDQYMCG…WDKVVETANL (276 aa). C339, C342, C358, and C360 together coordinate Zn(2+). The tract at residues 339 to 360 is C4; that stretch reads CNACGRGTWCTGNAIQGFACDC. Residues 478 to 712 form the CoV Nsp2 middle domain; the sequence is QHSLNFCQQF…LDIMSKAMKL (235 aa). Residues 714–847 enclose the CoV Nsp2 C-terminal domain; sequence HTNVSWAGTK…VSTLFRLKGG (134 aa). The region spanning 851–960 is the Ubiquitin-like 1 domain; sequence KKVTFGDVNT…MTFSINPVED (110 aa). The segment at 1039-1061 is disordered; the sequence is AQEPSVESTDSTPSTSTVVSEND. The span at 1041 to 1059 shows a compositional bias: low complexity; it reads EPSVESTDSTPSTSTVVSE. Macro domains lie at 1159-1328 and 1329-1453; these read DLSK…KPDG and LVYS…AIQT. The region spanning 1453-1526 is the DPUP domain; it reads TPETAFINNV…LEACRAYLTS (74 aa). Residues 1531-1586 form the Ubiquitin-like 2 domain; that stretch reads QVNIEVLVTIDGVNFRTVILNDATTFRKQLGATFYKGVDISDALPTVKMGGESLFV. One can recognise a Peptidase C16 domain in the interval 1600 to 1871; sequence EYYGTSDVTF…KVEVNPDLSN (272 aa). The active-site For PL-PRO activity is the C1641. C1721, C1724, C1756, and C1758 together coordinate Zn(2+). The C4-type zinc finger occupies 1721 to 1758; it reads CTVCGIRDIEYTGMRACVYAGVNSMEELQSVFNETCVC. Active-site for PL-PRO activity residues include H1807 and D1822. The 118-residue stretch at 1885–2002 folds into the Nucleic acid-binding domain; that stretch reads TIKYSPATIL…QLYDVAPIVL (118 aa). In terms of domain architecture, G2M spans 2019 to 2140; that stretch reads PNVPVVEDVS…AKITVTATTA (122 aa). Helical transmembrane passes span 2119–2139, 2152–2172, and 2229–2249; these read VLLGASSLFASFAKITVTATT, FVVNYGVLQNMFLFLKMLFFL, and LFLLLCTTILLLSSIYHLVIF. The interval 2119–2402 is HD1; the sequence is VLLGASSLFA…VTHIPLHGLV (284 aa). One can recognise a 3Ecto domain in the interval 2266–2332; that stretch reads LAMYKEVRSY…LQMLQTHITS (67 aa). 2 disulfides stabilise this stretch: C2282/C2310 and C2300/C2307. 3 consecutive transmembrane segments (helical) span residues 2333–2353, 2357–2377, and 2382–2402; these read YVLNIDWIWFALEFFLAYVLY, FNVLLLVVTAQYFFAYTSAFV, and YNYIVSGLFFLVTHIPLHGLV. The interval 2416-2506 is Y1; sequence KFYSHVINGC…TLRRLIKPTD (91 aa). The region spanning 2416 to 2789 is the CoV Nsp3 Y domain; sequence KFYSHVINGC…LSVKFSATKI (374 aa). Residues H2420, C2425, C2430, C2433, C2466, H2469, C2473, and C2476 each coordinate Zn(2+). The segment at 2420 to 2433 is ZF1; that stretch reads HVINGCKDTACLLC. Residues 2466-2476 are ZF2; the sequence is CCKHNWNCVEC. Positions 2507 to 2605 are Y2; that stretch reads QSHYYVDSVV…LVDVNLVTTV (99 aa). The interval 2507–2789 is coV-Y; the sequence is QSHYYVDSVV…LSVKFSATKI (283 aa). The Y3 stretch occupies residues 2606 to 2688; the sequence is GDSREIAIKM…DALQYAHKND (83 aa). The tract at residues 2689–2789 is Y4; it reads IQLTTECYNN…LSVKFSATKI (101 aa). The next 4 membrane-spanning stretches (helical) occupy residues 2807-2827, 3079-3099, 3112-3132, and 3156-3176; these read GYCILTLFVFTVAVLSWFCLP, STSLAMGLVLCVFLTAAFYYI, CAVVAVVAALLNSLCLCFIVA, and AFIMHISWYVMFGTVVPIWML. Residues 2807–3176 form an HD2 region; sequence GYCILTLFVF…FGTVVPIWML (370 aa). In terms of domain architecture, Nsp4C spans 3202 to 3298; it reads VFTDGKLNCS…NCSVTSSVLQ (97 aa). The Peptidase C30 domain occupies 3299 to 3604; that stretch reads SGLVKMSAPS…NMQVMGVVMQ (306 aa). Active-site for 3CL-PRO activity residues include H3339 and C3446. A run of 7 helical transmembrane segments spans residues 3610 to 3630, 3644 to 3664, 3669 to 3689, 3714 to 3734, 3742 to 3762, 3791 to 3811, and 3815 to 3835; these read ISYGFMHWLMSTLVLAYVSVM, TIPTQMTPLLFGFMACVMFTV, TFLSLFLLPVALCLTYANIVY, RTTHLDFGLYISLSFVLAIIV, MSNLALALCSGVMWFYTYVIG, LAKFISGLVFLYAPHLGFILP, and LVLLIYLCLGYMCTMYFGVFS. An HD3 region spans residues 3610–3835; it reads ISYGFMHWLM…MCTMYFGVFS (226 aa). In terms of domain architecture, RdRp Nsp7 cofactor spans 3897-3979; that stretch reads SKLTDLKCTS…DLFENSSVLQ (83 aa). A RdRp Nsp8 cofactor domain is found at 3980–4178; it reads ATLTEFSHLA…RASSSAVKLQ (199 aa). A Nsp9 ssRNA-binding domain is found at 4179–4288; that stretch reads NNEIHPKGLK…GHIAATVRLQ (110 aa). Positions 4289 to 4427 constitute an ExoN/MTase coactivator domain; the sequence is AGANTEFASN…DALRNNTVPQ (139 aa). Residues C4362, C4365, H4371, C4378, C4404, C4407, C4415, and C4417 each contribute to the Zn(2+) site. 2 zinc fingers span residues 4362-4378 and 4404-4417; these read CLYCRAHIEHPDVSGVC and CNVCQYWVGYGCNC. The 258-residue stretch at 4433-4690 folds into the NiRAN domain; that stretch reads FLNRVRGSSV…AAETHKDCDF (258 aa). Mn(2+) contacts are provided by N4638 and D4647. One can recognise a Nsp12 Interface domain in the interval 4695–4793; it reads IEWLLLEYDY…MNMDVNIHRH (99 aa). The Zn(2+) site is built by H4724, C4730, C4735, C4739, and C4916. Residues 4794–5361 enclose the Nsp12 RNA-dependent RNA polymerase domain; the sequence is RLALKELMMY…DLYSSPTTLQ (568 aa). The segment at 4796–5010 is rdRp Fingers N-ter; sequence ALKELMMYAA…HQKMLKSMAA (215 aa). Positions 5011 to 5049 are rdRp Palm N-ter; sequence TRGATCVIGTTKFYGGWDFMLKTLYKDVESPHLMGWDYP. In terms of domain architecture, RdRp catalytic spans 5041 to 5203; the sequence is PHLMGWDYPK…CYNSDYAAKG (163 aa). The rdRp Fingers C-ter stretch occupies residues 5050–5108; it reads KCDRAMPNMCRILASLILARKHSTCCTNSDRFYRLANECAQVLSEYVLCGGGYYVKPGG. Zn(2+) is bound by residues H5071, C5074, and C5075. Positions 5109–5244 are rdRp Palm C-ter; it reads TSSGDATTAY…EKGPHEFCSQ (136 aa). Active-site residues include S5188, D5189, and D5190. The interval 5245–5361 is rdRp Thumb; it reads HTLYIKDGDD…DLYSSPTTLQ (117 aa). Positions 5362–5474 constitute a CV ZBD domain; that stretch reads AVGSCVVCHS…MEFNRLATCD (113 aa). Residues C5366, C5369, C5377, C5380, C5387, C5390, H5394, H5400, C5411, C5416, C5433, and H5436 each contribute to the Zn(2+) site. One can recognise a (+)RNA virus helicase ATP-binding domain in the interval 5618-5799; it reads TVPEEFANHV…MCNLGPDIFL (182 aa). 5643 to 5650 lines the ATP pocket; that stretch reads GPPGTGKS. Residues 5800–5974 form the (+)RNA virus helicase C-terminal domain; that stretch reads SVCYRCPKEI…GLFKDCSRED (175 aa). One can recognise an ExoN domain in the interval 6031-6246; it reads LFITRDEAIR…RCLAIYDCFI (216 aa). Residues D6049, E6051, and E6150 contribute to the active site. 7 residues coordinate Zn(2+): C6166, C6169, C6185, H6188, H6216, C6220, and H6223. Residues H6227 and D6232 contribute to the active site. C6238 is a binding site for Zn(2+). In terms of domain architecture, N7-MTase spans 6255–6482; sequence YPYISHEQKL…NLWSTFVKVQ (228 aa). 6290–6296 contributes to the S-adenosyl-L-methionine binding site; sequence DIGNPKG. Positions 6368–6382 are gpppA-binding; the sequence is CNGGSLYVNKHAFHT. Residues C6406, C6428, C6439, and H6442 each coordinate Zn(2+). The Nsp15 N-terminal oligomerization domain occupies 6483 to 6543; that stretch reads GLENIAFNVI…NVAFELYAKR (61 aa). Residues 6544 to 6665 form the AV-Nsp11N/CoV-Nsp15M domain; that stretch reads AVRSHPDLNL…LYKKVNNEFV (122 aa). Positions 6682–6821 constitute a NendoU domain; that stretch reads TALTPMEEDF…KDGKVQTFYP (140 aa). Residues H6712, H6727, K6767, K6870, D6954, K6994, and E7027 contribute to the active site. The region spanning 6826 to 7120 is the Nidovirus-type SAM-dependent 2'-O-MTase domain; sequence TNDWKPGLTM…TLNVSTDVLV (295 aa).

This sequence belongs to the coronaviruses polyprotein 1ab family. Interacts with host PHB and PHB2. In terms of assembly, interacts with papain-like protease nsp3 and non-structural protein 6. As to quaternary structure, monomer. Homodimer. Only the homodimer shows catalytic activity. Interacts with nsp8 and nsp12 to form the replication-transcription complex (RTC): nsp12, nsp7, two subunits of nsp8, and up to two subunits of nsp13. In terms of assembly, interacts with nsp7, nsp13 and nsp12 to form the replication-transcription complex (RTC): nsp12, nsp7, two subunits of nsp8, and up to two subunits of nsp13. As to quaternary structure, interacts with nsp12. Interacts with proofreading exoribonuclease nsp14 and 2'-O-methyltransferase nsp16; these interactions enhance nsp14 and nsp16 enzymatic activities. In terms of assembly, interacts with nsp7 and nsp8 to form the replication-transcription complex (RTC): nsp12, nsp7, two subunits of nsp8, and up to two subunits of nsp13. Interacts with nsp9. As to quaternary structure, interacts with nsp8 to form the replication-transcription complex (RTC): nsp12, nsp7, two subunits of nsp8, and up to two subunits of nsp13. Requires Mn(2+) as cofactor. Mg(2+) is required as a cofactor. Specific enzymatic cleavages in vivo by its own proteases yield mature proteins. 3CL-PRO and PL-PRO proteinases are autocatalytically processed.

It localises to the host membrane. The protein resides in the host cytoplasm. It is found in the host perinuclear region. The protein localises to the host endoplasmic reticulum-Golgi intermediate compartment. The catalysed reaction is ATP + H2O = ADP + phosphate + H(+). The enzyme catalyses RNA(n) + a ribonucleoside 5'-triphosphate = RNA(n+1) + diphosphate. It carries out the reaction Thiol-dependent hydrolysis of ester, thioester, amide, peptide and isopeptide bonds formed by the C-terminal Gly of ubiquitin (a 76-residue protein attached to proteins as an intracellular targeting signal).. It catalyses the reaction a 5'-end (N(7)-methyl 5'-triphosphoguanosine)-ribonucleoside in mRNA + S-adenosyl-L-methionine = a 5'-end (N(7)-methyl 5'-triphosphoguanosine)-(2'-O-methyl-ribonucleoside) in mRNA + S-adenosyl-L-homocysteine + H(+). The catalysed reaction is uridylyl-uridylyl-ribonucleotide-RNA = a 3'-end uridylyl-2',3'-cyclophospho-uridine-RNA + a 5'-end dephospho-ribonucleoside-RNA. The enzyme catalyses a 5'-end diphospho-ribonucleoside in mRNA + GTP + H(+) = a 5'-end (5'-triphosphoguanosine)-ribonucleoside in mRNA + diphosphate. It carries out the reaction a 5'-end (5'-triphosphoguanosine)-ribonucleoside in mRNA + S-adenosyl-L-methionine = a 5'-end (N(7)-methyl 5'-triphosphoguanosine)-ribonucleoside in mRNA + S-adenosyl-L-homocysteine. Functionally, the replicase polyprotein of coronaviruses is a multifunctional protein: it contains the activities necessary for the transcription of negative stranded RNA, leader RNA, subgenomic mRNAs and progeny virion RNA as well as proteinases responsible for the cleavage of the polyprotein into functional products. Inhibits host translation by interacting with the 40S ribosomal subunit. The nsp1-40S ribosome complex further induces an endonucleolytic cleavage near the 5'UTR of host mRNAs, targeting them for degradation. Viral mRNAs are not susceptible to nsp1-mediated endonucleolytic RNA cleavage thanks to the presence of a 5'-end leader sequence and are therefore protected from degradation. By suppressing host gene expression, nsp1 facilitates efficient viral gene expression in infected cells and evasion from host immune response. Its function is as follows. May play a role in the modulation of host cell survival signaling pathway by interacting with host PHB and PHB2. Indeed, these two proteins play a role in maintaining the functional integrity of the mitochondria and protecting cells from various stresses. In terms of biological role, responsible for the cleavages located at the N-terminus of the replicase polyprotein. In addition, PL-PRO possesses a deubiquitinating/deISGylating activity and processes both 'Lys-48'- and 'Lys-63'-linked polyubiquitin chains from cellular substrates. Participates together with nsp4 in the assembly of virally-induced cytoplasmic double-membrane vesicles necessary for viral replication. Antagonizes innate immune induction of type I interferon by blocking the phosphorylation, dimerization and subsequent nuclear translocation of host IRF3. Also prevents host NF-kappa-B signaling. Functionally, participates in the assembly of virally-induced cytoplasmic double-membrane vesicles necessary for viral replication. Cleaves the C-terminus of replicase polyprotein at 11 sites. Recognizes substrates containing the core sequence [ILMVF]-Q-|-[SGACN]. Also able to bind an ADP-ribose-1''-phosphate (ADRP). Its function is as follows. Plays a role in the initial induction of autophagosomes from host endoplasmic reticulum. Later, limits the expansion of these phagosomes that are no longer able to deliver viral components to lysosomes. In terms of biological role, forms a hexadecamer with nsp8 (8 subunits of each) that may participate in viral replication by acting as a primase. Alternatively, may synthesize substantially longer products than oligonucleotide primers. Functionally, forms a hexadecamer with nsp7 (8 subunits of each) that may participate in viral replication by acting as a primase. Alternatively, may synthesize substantially longer products than oligonucleotide primers. Forms a primer, NSP9-pU, which is utilized by the polymerase for the initiation of RNA chains. Interacts with ribosome signal recognition particle RNA (SRP). Together with NSP8, suppress protein integration into the cell membrane, thereby disrupting host immune defenses. Its function is as follows. Plays a pivotal role in viral transcription by stimulating both nsp14 3'-5' exoribonuclease and nsp16 2'-O-methyltransferase activities. Therefore plays an essential role in viral mRNAs cap methylation. In terms of biological role, RNA-directed RNA polymerase that catalyzes the transcription of viral genomic and subgenomic RNAs. Acts in complex with nsp7 and nsp8 to transcribe both the minus and positive strands of genomic RNA. The kinase-like NiRAN domain of NSP12 attaches one or more nucleotides to the amino terminus of NSP9, forming a covalent RNA-protein intermediate that serves as transcription/replication primer. Subgenomic RNAs (sgRNAs) are formed by discontinuous transcription: The polymerase has the ability to pause at transcription-regulating sequences (TRS) and jump to the leader TRS, resulting in a major deletion. This creates a series of subgenomic RNAs that are replicated, transcribed and translated. In addition, Nsp12 is a subunit of the viral RNA capping enzyme that catalyzes the RNA guanylyltransferase reaction for genomic and sub-genomic RNAs. Subsequently, the NiRAN domain transfers RNA to GDP, and forms the core cap structure GpppA-RNA. Functionally, multi-functional protein with a zinc-binding domain in N-terminus displaying RNA and DNA duplex-unwinding activities with 5' to 3' polarity. Activity of helicase is dependent on magnesium. Plays a role in viral RNA synthesis through two distinct activities. The N7-guanine methyltransferase activity plays a role in the formation of the cap structure GpppA-RNA. The proofreading exoribonuclease reduces the sensitivity of the virus to RNA mutagens during replication. This activity acts on both ssRNA and dsRNA in a 3'-5' direction. Its function is as follows. Plays a role in viral transcription/replication and prevents the simultaneous activation of host cell dsRNA sensors, such as MDA5/IFIH1, OAS, and PKR. Acts by degrading the 5'-polyuridines generated during replication of the poly(A) region of viral genomic and subgenomic RNAs. Catalyzes a two-step reaction in which a 2'3'-cyclic phosphate (2'3'-cP) is first generated by 2'-O transesterification, which is then hydrolyzed to a 3'-phosphate (3'-P). If not degraded, poly(U) RNA would hybridize with poly(A) RNA tails and activate host dsRNA sensors. In terms of biological role, methyltransferase that mediates mRNA cap 2'-O-ribose methylation to the 5'-cap structure of viral mRNAs. N7-methyl guanosine cap is a prerequisite for binding of nsp16. Therefore plays an essential role in viral mRNAs cap methylation which is essential to evade immune system. The chain is Replicase polyprotein 1ab (rep) from Bat coronavirus 133/2005 (BtCoV).